The following is a 333-amino-acid chain: Tubulin alpha chain (333 aa).

Residues serine 48, glycine 52, threonine 53, threonine 88, asparagine 115, and asparagine 137 each coordinate GTP.

Belongs to the tubulin family. In terms of assembly, dimer of alpha and beta chains. A typical microtubule is a hollow water-filled tube with an outer diameter of 25 nm and an inner diameter of 15 nM. Alpha-beta heterodimers associate head-to-tail to form protofilaments running lengthwise along the microtubule wall with the beta-tubulin subunit facing the microtubule plus end conferring a structural polarity. Microtubules usually have 13 protofilaments but different protofilament numbers can be found in some organisms and specialized cells. Mg(2+) serves as cofactor. Post-translationally, undergoes a tyrosination/detyrosination cycle, the cyclic removal and re-addition of a C-terminal tyrosine residue by the enzymes tubulin tyrosine carboxypeptidase (TTCP) and tubulin tyrosine ligase (TTL), respectively.

The protein resides in the cytoplasm. It localises to the cytoskeleton. The enzyme catalyses GTP + H2O = GDP + phosphate + H(+). Functionally, tubulin is the major constituent of microtubules, a cylinder consisting of laterally associated linear protofilaments composed of alpha- and beta-tubulin heterodimers. Microtubules grow by the addition of GTP-tubulin dimers to the microtubule end, where a stabilizing cap forms. Below the cap, tubulin dimers are in GDP-bound state, owing to GTPase activity of alpha-tubulin. In Dictyostelium purpureum (Slime mold), this protein is Tubulin alpha chain (tuba).